A 245-amino-acid polypeptide reads, in one-letter code: Methyltransferase-like protein 27 (245 aa).

The chain is Methyltransferase-like protein 27 from Homo sapiens (Human).